An 88-amino-acid polypeptide reads, in one-letter code: MQAARFVVSGVVQGVWYRASTRERAVALGLVGHARNQTDGSVEVVAAGSAAALGALEAWLWQGPPAATVEAVTRTPCAVPPTEDFVTG.

The region spanning 3 to 88 is the Acylphosphatase-like domain; that stretch reads AARFVVSGVV…VPPTEDFVTG (86 aa). Catalysis depends on residues Arg18 and Asn36.

Belongs to the acylphosphatase family.

The catalysed reaction is an acyl phosphate + H2O = a carboxylate + phosphate + H(+). This is Acylphosphatase (acyP) from Xanthomonas oryzae pv. oryzae (strain MAFF 311018).